Reading from the N-terminus, the 509-residue chain is Thymus-specific serine protease (509 aa).

The N-terminal stretch at 1 to 22 (MAVKAPWLGFLLLVSLWGLSTP) is a signal peptide. Asn69 and Asn171 each carry an N-linked (GlcNAc...) asparagine glycan. The active-site Charge relay system is the Ser184. Asn320 carries an N-linked (GlcNAc...) asparagine glycan. Catalysis depends on charge relay system residues Asp446 and His471.

This sequence belongs to the peptidase S28 family. In terms of tissue distribution, expressed predominantly in cortical thymic epithelial cells, with highest expression around vessels and the thymic capsule.

Its subcellular location is the cytoplasmic vesicle. Protease that may play a role in T-cell development. This Mus musculus (Mouse) protein is Thymus-specific serine protease (Prss16).